The chain runs to 314 residues: tRNA dimethylallyltransferase (314 aa).

11 to 18 (GPTGSGKT) lines the ATP pocket. 13-18 (TGSGKT) contributes to the substrate binding site. An interaction with substrate tRNA region spans residues 36 to 39 (DSMQ).

Belongs to the IPP transferase family. In terms of assembly, monomer. It depends on Mg(2+) as a cofactor.

The catalysed reaction is adenosine(37) in tRNA + dimethylallyl diphosphate = N(6)-dimethylallyladenosine(37) in tRNA + diphosphate. Catalyzes the transfer of a dimethylallyl group onto the adenine at position 37 in tRNAs that read codons beginning with uridine, leading to the formation of N6-(dimethylallyl)adenosine (i(6)A). This chain is tRNA dimethylallyltransferase, found in Chlamydia trachomatis serovar D (strain ATCC VR-885 / DSM 19411 / UW-3/Cx).